The chain runs to 682 residues: Methionine--tRNA ligase (682 aa).

Positions 15-25 (PYANGAIHLGH) match the 'HIGH' region motif. Zn(2+) contacts are provided by Cys146, Cys149, Cys159, and Cys162. The 'KMSKS' region motif lies at 331–335 (KMSKS). Lys334 serves as a coordination point for ATP. The region spanning 580–682 (DFAKLDMRVA…NGVTAGMQVK (103 aa)) is the tRNA-binding domain.

Belongs to the class-I aminoacyl-tRNA synthetase family. MetG type 1 subfamily. In terms of assembly, homodimer. The cofactor is Zn(2+).

It localises to the cytoplasm. It catalyses the reaction tRNA(Met) + L-methionine + ATP = L-methionyl-tRNA(Met) + AMP + diphosphate. Functionally, is required not only for elongation of protein synthesis but also for the initiation of all mRNA translation through initiator tRNA(fMet) aminoacylation. The chain is Methionine--tRNA ligase from Haemophilus influenzae (strain PittGG).